A 455-amino-acid chain; its full sequence is Anthocyanidin 3-O-glucosyltransferase (455 aa).

His18 serves as the catalytic Proton acceptor. Residue His18 participates in an anthocyanidin binding. The active-site Charge relay is the Asp118. Thr139 is a UDP-alpha-D-glucose binding site. An anthocyanidin is bound at residue His148. Positions 336, 338, 353, 356, 358, and 361 each coordinate UDP-alpha-D-glucose. Gly376 lines the an anthocyanidin pocket. UDP-alpha-D-glucose-binding residues include Asp377 and Gln378.

It belongs to the UDP-glycosyltransferase family.

The enzyme catalyses an anthocyanidin + UDP-alpha-D-glucose + H(+) = an anthocyanidin 3-O-beta-D-glucoside + UDP. Its pathway is pigment biosynthesis; anthocyanin biosynthesis. Its function is as follows. In the presence of other necessary color factors, this glycosylation reaction allows the accumulation of anthocyanin pigments. The polypeptide is Anthocyanidin 3-O-glucosyltransferase (BZ1) (Hordeum vulgare (Barley)).